The following is a 144-amino-acid chain: Large ribosomal subunit protein uL16 (144 aa).

It belongs to the universal ribosomal protein uL16 family. Part of the 50S ribosomal subunit.

Binds 23S rRNA and is also seen to make contacts with the A and possibly P site tRNAs. The protein is Large ribosomal subunit protein uL16 of Acidobacterium capsulatum (strain ATCC 51196 / DSM 11244 / BCRC 80197 / JCM 7670 / NBRC 15755 / NCIMB 13165 / 161).